Consider the following 267-residue polypeptide: MQQREEKQLEAFLESLVARVAHLKGSLQSFIYKLENEYDRLTWPSVLDNFALISGQLNTINKLLRNEKTPSYKSQVIIPLLLSPDRDEELAKLTEHRVPVFSHEIVPDHLRTKPDPEVEEQEKHLSAEAARIGPEVAQKQIQALNKLCSNLLEKLNNPREDRDSETSALRQNKPSFNPADTNALVAAVGFGKGLSKCRPPGPVAPGHPGQPMMQTGPTLQQVTIAGASGHQAGMSGPVAPQQPGQPGKIPSNIKTNIKSASMHPYNR.

Coiled-coil stretches lie at residues 2–27 (QQRE…KGSL) and 118–163 (VEEQ…EDRD). Positions 156-165 (NNPREDRDSE) are enriched in basic and acidic residues. Disordered regions lie at residues 156 to 180 (NNPR…NPAD) and 227 to 267 (ASGH…PYNR). The span at 166–180 (TSALRQNKPSFNPAD) shows a compositional bias: polar residues. The segment covering 236-247 (GPVAPQQPGQPG) has biased composition (low complexity).

Belongs to the Mediator complex subunit 8 family. In terms of assembly, component of the Mediator complex. May be part of a multisubunit E3 ubiquitin-protein ligase complex.

Its subcellular location is the nucleus. It functions in the pathway protein modification; protein ubiquitination. Component of the Mediator complex, a coactivator involved in the regulated transcription of nearly all RNA polymerase II-dependent genes. Mediator functions as a bridge to convey information from gene-specific regulatory proteins to the basal RNA polymerase II transcription machinery. Mediator is recruited to promoters by direct interactions with regulatory proteins and serves as a scaffold for the assembly of a functional preinitiation complex with RNA polymerase II and the general transcription factors. May play a role as a target recruitment subunit in E3 ubiquitin-protein ligase complexes and thus in ubiquitination and subsequent proteasomal degradation of target proteins. The polypeptide is Mediator of RNA polymerase II transcription subunit 8 (med8) (Danio rerio (Zebrafish)).